Consider the following 215-residue polypeptide: Probable phosphoglycerate mutase GpmB (215 aa).

Substrate contacts are provided by residues 8 to 15 (RHGETQWN), 21 to 22 (QG), arginine 58, arginine 60, 82 to 85 (ELNM), 104 to 105 (RR), and 151 to 152 (GI). Residue histidine 9 is the Tele-phosphohistidine intermediate of the active site. Residue glutamate 82 is the Proton donor/acceptor of the active site.

Belongs to the phosphoglycerate mutase family. GpmB subfamily.

The catalysed reaction is (2R)-2-phosphoglycerate = (2R)-3-phosphoglycerate. It functions in the pathway carbohydrate degradation; glycolysis; pyruvate from D-glyceraldehyde 3-phosphate: step 3/5. The polypeptide is Probable phosphoglycerate mutase GpmB (Escherichia fergusonii (strain ATCC 35469 / DSM 13698 / CCUG 18766 / IAM 14443 / JCM 21226 / LMG 7866 / NBRC 102419 / NCTC 12128 / CDC 0568-73)).